We begin with the raw amino-acid sequence, 124 residues long: Fluoride-specific ion channel FluC (124 aa).

4 consecutive transmembrane segments (helical) span residues 4 to 24 (VLYI…ISIL), 35 to 55 (FGTL…YALA), 60 to 80 (IGPE…TTFS), and 100 to 120 (LNVL…QQLI). 2 residues coordinate Na(+): glycine 74 and threonine 77.

Belongs to the fluoride channel Fluc/FEX (TC 1.A.43) family.

The protein resides in the cell inner membrane. It carries out the reaction fluoride(in) = fluoride(out). Na(+) is not transported, but it plays an essential structural role and its presence is essential for fluoride channel function. Its function is as follows. Fluoride-specific ion channel. Important for reducing fluoride concentration in the cell, thus reducing its toxicity. The protein is Fluoride-specific ion channel FluC of Shewanella amazonensis (strain ATCC BAA-1098 / SB2B).